The primary structure comprises 505 residues: Histidine ammonia-lyase (505 aa).

The 5-imidazolinone (Ala-Gly) cross-link spans 141–143 (ASG). 2,3-didehydroalanine (Ser) is present on S142.

This sequence belongs to the PAL/histidase family. In terms of processing, contains an active site 4-methylidene-imidazol-5-one (MIO), which is formed autocatalytically by cyclization and dehydration of residues Ala-Ser-Gly.

It is found in the cytoplasm. It carries out the reaction L-histidine = trans-urocanate + NH4(+). The protein operates within amino-acid degradation; L-histidine degradation into L-glutamate; N-formimidoyl-L-glutamate from L-histidine: step 1/3. The sequence is that of Histidine ammonia-lyase from Bacillus cereus (strain AH187).